Reading from the N-terminus, the 214-residue chain is Cytochrome c biogenesis ATP-binding export protein CcmA (214 aa).

Residues 12–214 form the ABC transporter domain; that stretch reads LAAHDLAFSR…TRMLTLEVAA (203 aa). 44–51 provides a ligand contact to ATP; that stretch reads GDNGAGKT.

Belongs to the ABC transporter superfamily. CcmA exporter (TC 3.A.1.107) family. As to quaternary structure, the complex is composed of two ATP-binding proteins (CcmA) and two transmembrane proteins (CcmB).

It localises to the cell inner membrane. It carries out the reaction heme b(in) + ATP + H2O = heme b(out) + ADP + phosphate + H(+). In terms of biological role, part of the ABC transporter complex CcmAB involved in the biogenesis of c-type cytochromes; once thought to export heme, this seems not to be the case, but its exact role is uncertain. Responsible for energy coupling to the transport system. The chain is Cytochrome c biogenesis ATP-binding export protein CcmA from Xanthomonas axonopodis pv. citri (strain 306).